Reading from the N-terminus, the 266-residue chain is MAKMTTLKMKEKLEKELQAPNRQFSYNRDNDTLTVAQNGKKVTLTIPQIIANFENDGNAAVEKIVYYVEEGFRAAAGNVELENNKASIYPVVRATSFPDETKAGEALLTDDHTAETKIFYAVDLGKSYRFIEESMLKKAQLTHKEIREVAFNNLANLEIPLKKDSVNGNDFYFVRTNDGYDASRLLNEAFLREMREKLTGEMVLAVPHQDVLIIGDIQDNTGYDVLAHMTMDFFADGLVPITSLPFVYNNGKLEPIFIMAKNRLKE.

The protein belongs to the UPF0354 family.

In Listeria monocytogenes serotype 4b (strain CLIP80459), this protein is UPF0354 protein Lm4b_01619.